Here is a 92-residue protein sequence, read N- to C-terminus: Small ribosomal subunit protein uS19 (92 aa).

Belongs to the universal ribosomal protein uS19 family.

Functionally, protein S19 forms a complex with S13 that binds strongly to the 16S ribosomal RNA. The protein is Small ribosomal subunit protein uS19 of Borrelia hermsii (strain HS1 / DAH).